A 286-amino-acid chain; its full sequence is Shikimate dehydrogenase (NADP(+)) (286 aa).

Shikimate-binding positions include 22–24 (SFS) and Thr69. Residue Lys73 is the Proton acceptor of the active site. NADP(+) is bound at residue Glu85. Residues Asn94 and Asp109 each coordinate shikimate. NADP(+) is bound by residues 133–137 (GAGGA), 157–162 (NRTIDK), and Leu231. Position 233 (Tyr233) interacts with shikimate. Residue Gly254 coordinates NADP(+).

The protein belongs to the shikimate dehydrogenase family. As to quaternary structure, homodimer.

It catalyses the reaction shikimate + NADP(+) = 3-dehydroshikimate + NADPH + H(+). The protein operates within metabolic intermediate biosynthesis; chorismate biosynthesis; chorismate from D-erythrose 4-phosphate and phosphoenolpyruvate: step 4/7. Functionally, involved in the biosynthesis of the chorismate, which leads to the biosynthesis of aromatic amino acids. Catalyzes the reversible NADPH linked reduction of 3-dehydroshikimate (DHSA) to yield shikimate (SA). In Alkaliphilus oremlandii (strain OhILAs) (Clostridium oremlandii (strain OhILAs)), this protein is Shikimate dehydrogenase (NADP(+)).